The following is a 356-amino-acid chain: Photosynthetic reaction center cytochrome c subunit (356 aa).

Residues 1–20 (MKQLIVNSVATVALASLVAG) form the signal peptide. The S-diacylglycerol cysteine moiety is linked to residue Cys-21. Residues Met-94, Cys-107, Cys-110, His-111, Met-130, His-144, Cys-152, Cys-155, His-156, Met-253, Cys-264, Cys-267, His-268, Cys-325, Cys-328, and His-329 each contribute to the heme site.

In terms of assembly, component of the photosynthetic reaction center composed of protein subunits L (PufL), M (PufM), H (PuhA) and cytochrome C (PufC). Post-translationally, binds 4 heme groups per subunit. After the signal sequence is removed, the N-terminal cysteine is modified to form a diacylglyceride thioether, but the alpha-amino group is free and is not N-palmitoylated.

The protein localises to the cellular chromatophore membrane. Functionally, the reaction center of purple bacteria contains a tightly bound cytochrome molecule which re-reduces the photo oxidized primary electron donor. In Blastochloris viridis (Rhodopseudomonas viridis), this protein is Photosynthetic reaction center cytochrome c subunit.